A 265-amino-acid chain; its full sequence is Undecaprenyl-diphosphatase (265 aa).

7 consecutive transmembrane segments (helical) span residues 38–58, 75–95, 108–128, 135–155, 181–201, 215–235, and 244–264; these read RSDFFNIVIQAGAILAICLAL, RDYVLKVSVAFLVTAVVGLIV, PVAWALLIGGVWMLVAEHVAG, VVTWKVAIAVGLAQVVAGVFP, FVFMVGIPTMFAASGYALLEM, VAVAFVAATITGFVVVKWLLS, and VFAVYRIVLGAALLLWLPAAA.

It belongs to the UppP family.

The protein localises to the cell inner membrane. It carries out the reaction di-trans,octa-cis-undecaprenyl diphosphate + H2O = di-trans,octa-cis-undecaprenyl phosphate + phosphate + H(+). In terms of biological role, catalyzes the dephosphorylation of undecaprenyl diphosphate (UPP). Confers resistance to bacitracin. This Xanthomonas oryzae pv. oryzae (strain MAFF 311018) protein is Undecaprenyl-diphosphatase.